The sequence spans 196 residues: Heat shock protein beta-8 (196 aa).

Residues 1 to 34 (MADGQMPFPCHYTSRRRRDPFRDSPLSSRLLDDG) form a disordered region. Residues 23–34 (DSPLSSRLLDDG) show a composition bias toward low complexity. 2 positions are modified to phosphoserine: serine 24 and serine 57. A Phosphothreonine modification is found at threonine 63. Asymmetric dimethylarginine is present on residues arginine 71 and arginine 78. One can recognise a sHSP domain in the interval 74–185 (TAMTRFGVPA…PFGESSFNNE (112 aa)). Residue serine 87 is modified to Phosphoserine. The disordered stretch occupies residues 176-196 (PFGESSFNNELPQDGQEVTCT). The span at 178 to 196 (GESSFNNELPQDGQEVTCT) shows a compositional bias: polar residues.

It belongs to the small heat shock protein (HSP20) family. As to quaternary structure, monomer. Forms a ternary complex with BAG3 and HSPA1A. Component of the chaperone-assisted selective autophagy (CASA) complex consisting of BAG3, HSPA8/HSC70, HSPB8 and STUB1/CHIP. Interacts with HSPB1. Interacts with DNAJB6. Interacts with BAG3. In terms of processing, phosphorylated.

It is found in the cytoplasm. The protein localises to the nucleus. Involved in the chaperone-assisted selective autophagy (CASA), a crucial process for protein quality control, particularly in mechanical strained cells and tissues such as muscle. Displays temperature-dependent chaperone activity. The polypeptide is Heat shock protein beta-8 (HSPB8) (Bos taurus (Bovine)).